Reading from the N-terminus, the 169-residue chain is FAM231A/C-like protein LOC102723383 (169 aa).

Residues 82–140 (LIRSGSSQNESQEDQGAGLISQAGLKADNRRESSTWANEVEDRRPQCTPALNLTPSHPH) are disordered.

The protein belongs to the FAM231 family.

This chain is FAM231A/C-like protein LOC102723383, found in Homo sapiens (Human).